Here is a 356-residue protein sequence, read N- to C-terminus: tRNA N6-adenosine threonylcarbamoyltransferase (356 aa).

2 residues coordinate Fe cation: His115 and His119. Substrate contacts are provided by residues 138-142 (LVSGG), Asp171, Gly184, and Asn283. Asp311 contributes to the Fe cation binding site.

It belongs to the KAE1 / TsaD family. It depends on Fe(2+) as a cofactor.

The protein localises to the cytoplasm. The enzyme catalyses L-threonylcarbamoyladenylate + adenosine(37) in tRNA = N(6)-L-threonylcarbamoyladenosine(37) in tRNA + AMP + H(+). Its function is as follows. Required for the formation of a threonylcarbamoyl group on adenosine at position 37 (t(6)A37) in tRNAs that read codons beginning with adenine. Is involved in the transfer of the threonylcarbamoyl moiety of threonylcarbamoyl-AMP (TC-AMP) to the N6 group of A37, together with TsaE and TsaB. TsaD likely plays a direct catalytic role in this reaction. The sequence is that of tRNA N6-adenosine threonylcarbamoyltransferase from Prochlorococcus marinus subsp. pastoris (strain CCMP1986 / NIES-2087 / MED4).